The following is a 302-amino-acid chain: Protein FdhE homolog (302 aa).

Belongs to the FdhE family.

The protein resides in the cytoplasm. Necessary for formate dehydrogenase activity. In Shewanella sp. (strain MR-4), this protein is Protein FdhE homolog.